We begin with the raw amino-acid sequence, 145 residues long: Large ribosomal subunit protein uL15 (145 aa).

A disordered region spans residues 1-43 (MRLNTIKPGAGSKSAAKRVGRGIGSGLGKTCGRGHKGQKSRAG). The segment covering 21–31 (RGIGSGLGKTC) has biased composition (gly residues).

The protein belongs to the universal ribosomal protein uL15 family. Part of the 50S ribosomal subunit.

Its function is as follows. Binds to the 23S rRNA. The protein is Large ribosomal subunit protein uL15 of Aromatoleum aromaticum (strain DSM 19018 / LMG 30748 / EbN1) (Azoarcus sp. (strain EbN1)).